Here is a 502-residue protein sequence, read N- to C-terminus: DnaJ homolog subfamily C member 3 homolog (502 aa).

Positions 1–25 are cleaved as a signal peptide; the sequence is MIVNKKYFLLICIIILISINCLVLA. TPR repeat units follow at residues 29–62, 69–102, 103–136, 184–217, 218–251, 264–297, 302–335, and 336–369; these read IENF…IGSD, VSLL…NPDN, IHAR…RPDN, KEVR…EPSS, VAAL…DPDN, FEKS…EPNS, TPLY…DELN, and ADAL…KPND. Asparagine 51 carries N-linked (GlcNAc...) asparagine glycosylation. An intrachain disulfide couples cysteine 309 to cysteine 325. Positions 390–457 constitute a J domain; it reads DYYKILGIQK…EKRKRYDMGE (68 aa).

It localises to the secreted. Its subcellular location is the endoplasmic reticulum lumen. Functionally, may be involved in the unfolded protein response (UPR) during ER stress. The protein is DnaJ homolog subfamily C member 3 homolog (dnajc3) of Dictyostelium discoideum (Social amoeba).